The following is a 670-amino-acid chain: Outer dynein arm-docking complex subunit 1 (670 aa).

Coiled-coil stretches lie at residues 9-155 (SKEV…RYLN), 183-224 (AVRE…EQLH), and 302-381 (NFIN…IQLL). Residues 454-473 (KMAPLQPPDTLEDPPGFEAS) form a disordered region. S517 carries the post-translational modification Phosphoserine. Disordered stretches follow at residues 526–596 (AGSS…ASSG) and 616–670 (VGSS…DSRG). Positions 584–596 (GHVTFGSTSASSG) are enriched in polar residues. The span at 650–670 (SSTGPASSTGPGSSTSKDSRG) shows a compositional bias: low complexity.

The protein belongs to the ODA1/DCC2 family. As to quaternary structure, component of the outer dynein arm-docking complex along with ODAD2, ODAD3, ODAD4 and CLXN. Interacts with ODAD3. Interacts with ODAD4; this interaction may facilitate the recruitment and/or attachment of outer dynein arm docking complex proteins, including ODAD1, ODAD3, and ODAD4 to ciliary axonemes. Interacts with DNAH9. Interacts with MNS1. Interacts with PIERCE1 and PIERCE2; the interactions link the outer dynein arms docking complex (ODA-DC) to the internal microtubule inner proteins (MIP) in cilium axoneme. In terms of tissue distribution, expressed in nasal epithelial cells. Highly expressed in testis and also detected in lung, brain and kidney.

Its subcellular location is the cytoplasm. It localises to the cytoskeleton. The protein resides in the cilium axoneme. Component of the outer dynein arm-docking complex (ODA-DC) that mediates outer dynein arms (ODA) binding onto the doublet microtubule. Involved in mediating assembly of both ODAs and their axonemal docking complex onto ciliary microtubules. This is Outer dynein arm-docking complex subunit 1 from Homo sapiens (Human).